The chain runs to 31 residues: Cyclotide mden-N (31 aa).

A cross-link (cyclopeptide (Gly-Asn)) is located at residues 1-31 (GTIPCGESCVYIPCLTSALGCSCKNKVCYRN). Intrachain disulfides connect Cys-5–Cys-21, Cys-9–Cys-23, and Cys-14–Cys-28.

The protein belongs to the cyclotide family. Bracelet subfamily. This is a cyclic peptide.

Probably participates in a plant defense mechanism. This chain is Cyclotide mden-N, found in Melicytus dentatus (Tree violet).